Consider the following 403-residue polypeptide: Argininosuccinate synthase 1 (403 aa).

Residues 10-18 (SYSGGLDTS) and alanine 37 each bind ATP. L-citrulline is bound by residues tyrosine 88 and serine 93. Glycine 118 is a binding site for ATP. 3 residues coordinate L-aspartate: threonine 120, asparagine 124, and aspartate 125. An L-citrulline-binding site is contributed by asparagine 124. L-citrulline contacts are provided by arginine 128, serine 179, serine 188, glutamate 264, and tyrosine 276.

It belongs to the argininosuccinate synthase family. Type 1 subfamily. In terms of assembly, homotetramer.

It is found in the cytoplasm. The enzyme catalyses L-citrulline + L-aspartate + ATP = 2-(N(omega)-L-arginino)succinate + AMP + diphosphate + H(+). It functions in the pathway amino-acid biosynthesis; L-arginine biosynthesis; L-arginine from L-ornithine and carbamoyl phosphate: step 2/3. The polypeptide is Argininosuccinate synthase 1 (Rhizobium johnstonii (strain DSM 114642 / LMG 32736 / 3841) (Rhizobium leguminosarum bv. viciae)).